The following is a 143-amino-acid chain: uncharacterized protein (143 aa).

2 helical membrane passes run 16–36 (LIFAQIFIGCLMYFMLIIFVW) and 48–68 (ICYIIIFAIIDFVVCFKFIYV). N71 carries an N-linked (GlcNAc...) asparagine; by host glycan.

Its subcellular location is the membrane. This is an uncharacterized protein from Acanthamoeba polyphaga (Amoeba).